Consider the following 389-residue polypeptide: Succinyl-diaminopimelate desuccinylase (389 aa).

His72 lines the Zn(2+) pocket. Asp74 is an active-site residue. Asp105 contributes to the Zn(2+) binding site. The active-site Proton acceptor is Glu144. Zn(2+) is bound by residues Glu145, Glu173, and His362.

The protein belongs to the peptidase M20A family. DapE subfamily. In terms of assembly, homodimer. Zn(2+) serves as cofactor. The cofactor is Co(2+).

It carries out the reaction N-succinyl-(2S,6S)-2,6-diaminopimelate + H2O = (2S,6S)-2,6-diaminopimelate + succinate. It functions in the pathway amino-acid biosynthesis; L-lysine biosynthesis via DAP pathway; LL-2,6-diaminopimelate from (S)-tetrahydrodipicolinate (succinylase route): step 3/3. Functionally, catalyzes the hydrolysis of N-succinyl-L,L-diaminopimelic acid (SDAP), forming succinate and LL-2,6-diaminopimelate (DAP), an intermediate involved in the bacterial biosynthesis of lysine and meso-diaminopimelic acid, an essential component of bacterial cell walls. This Nitrobacter hamburgensis (strain DSM 10229 / NCIMB 13809 / X14) protein is Succinyl-diaminopimelate desuccinylase.